Consider the following 179-residue polypeptide: Large ribosomal subunit protein uL6 (179 aa).

This sequence belongs to the universal ribosomal protein uL6 family. As to quaternary structure, part of the 50S ribosomal subunit.

Its function is as follows. This protein binds to the 23S rRNA, and is important in its secondary structure. It is located near the subunit interface in the base of the L7/L12 stalk, and near the tRNA binding site of the peptidyltransferase center. The protein is Large ribosomal subunit protein uL6 of Geotalea daltonii (strain DSM 22248 / JCM 15807 / FRC-32) (Geobacter daltonii).